We begin with the raw amino-acid sequence, 250 residues long: Large ribosomal subunit protein uL29m (250 aa).

A mitochondrion-targeting transit peptide spans 1-24 (MRPGAASIRTTGSVLAFLVPSAQC). Positions 66 to 86 (VLSKKGSGDQPPKPVPITEKV) are disordered.

The protein belongs to the universal ribosomal protein uL29 family. In terms of assembly, component of the mitochondrial large ribosomal subunit. Mature mitochondrial ribosomes consist of a small (37S) and a large (54S) subunit. The 37S subunit contains at least 33 different proteins and 1 molecule of RNA (15S). The 54S subunit contains at least 45 different proteins and 1 molecule of RNA (21S).

It localises to the mitochondrion. The sequence is that of Large ribosomal subunit protein uL29m (MRPL4) from Phaeosphaeria nodorum (strain SN15 / ATCC MYA-4574 / FGSC 10173) (Glume blotch fungus).